A 390-amino-acid chain; its full sequence is Period circadian protein (390 aa).

4 disordered regions span residues 27 to 120, 164 to 188, 247 to 266, and 327 to 356; these read VTAP…APPV, LEYS…WEGE, GGNG…STNQ, and SPSG…TSQA. A compositionally biased stretch (gly residues) spans 93 to 114; that stretch reads GTSGTGNSGDGGGGGGADGTGS. The segment covering 247 to 256 has biased composition (gly residues); that stretch reads GGNGNVGSGN.

In terms of assembly, forms a heterodimer with timeless (TIM); the complex then translocates into the nucleus. Post-translationally, phosphorylated with a circadian rhythmicity, probably by the double-time protein (dbt). Phosphorylation could be implicated in the stability of per monomer and in the formation of heterodimer per-tim.

It localises to the nucleus. The protein resides in the cytoplasm. Its subcellular location is the perinuclear region. Essential for biological clock functions. Determines the period length of circadian and ultradian rhythms; an increase in PER dosage leads to shortened circadian rhythms and a decrease leads to lengthened circadian rhythms. Essential for the circadian rhythmicity of locomotor activity, eclosion behavior, and for the rhythmic component of the male courtship song that originates in the thoracic nervous system. The biological cycle depends on the rhythmic formation and nuclear localization of the TIM-PER complex. Light induces the degradation of TIM, which promotes elimination of PER. Nuclear activity of the heterodimer coordinatively regulates PER and TIM transcription through a negative feedback loop. Behaves as a negative element in circadian transcriptional loop. Does not appear to bind DNA, suggesting indirect transcriptional inhibition. The chain is Period circadian protein (per) from Drosophila tropicalis (Fruit fly).